The sequence spans 243 residues: Small ribosomal subunit protein uS2 (243 aa).

The protein belongs to the universal ribosomal protein uS2 family.

This is Small ribosomal subunit protein uS2 from Aliivibrio salmonicida (strain LFI1238) (Vibrio salmonicida (strain LFI1238)).